A 704-amino-acid polypeptide reads, in one-letter code: Ion-translocating oxidoreductase complex subunit C (704 aa).

2 consecutive 4Fe-4S ferredoxin-type domains span residues 368 to 397 (MGAPQEEKSCIRCSACADACPADLLPQQLY) and 407 to 436 (KATAHHIADCIECGACAWVCPSNIPLVQYF). [4Fe-4S] cluster-binding residues include C377, C380, C383, C387, C416, C419, C422, and C426. Residues 536 to 684 (RAKQAAHPMA…PADPRKAAVA (149 aa)) are disordered. Low complexity predominate over residues 556 to 565 (KAAVEAAIAR).

Belongs to the 4Fe4S bacterial-type ferredoxin family. RnfC subfamily. In terms of assembly, the complex is composed of six subunits: RsxA, RsxB, RsxC, RsxD, RsxE and RsxG. [4Fe-4S] cluster is required as a cofactor.

Its subcellular location is the cell inner membrane. In terms of biological role, part of a membrane-bound complex that couples electron transfer with translocation of ions across the membrane. Required to maintain the reduced state of SoxR. This Salmonella choleraesuis (strain SC-B67) protein is Ion-translocating oxidoreductase complex subunit C.